Reading from the N-terminus, the 1220-residue chain is Protein transport protein Sec31A (1220 aa).

WD repeat units follow at residues 4–47, 68–111, 120–160, 166–206, 209–254, 258–298, and 301–342; these read KEVD…EIFE, RYHK…AGDK, KHTG…TPMT, QPPE…PIIK, DHSN…SPLR, NHAR…VLYE, and TNTQ…DGLR. Positions 161 to 471 are interaction with SEC13; sequence PGAKTQPPED…IDASQTEFEK (311 aa). One copy of the WD 8; interaction with SEC13 repeat lies at 397 to 430; the sequence is SFSFGGKLVTFENVRMPSHQGAEQQQQQHHVFIS. Phosphoserine occurs at positions 527 and 532. A Glycyl lysine isopeptide (Lys-Gly) (interchain with G-Cter in ubiquitin) cross-link involves residue Lys-647. Disordered stretches follow at residues 791 to 908 and 924 to 1096; these read GEPV…NAYP and QLYA…GNTF. At Ser-799 the chain carries Phosphoserine. The interval 800-1113 is interaction with PDCD6; the sequence is PKIPYEKQQL…TKKITKKPIP (314 aa). An ALG-2-binding site motif-2 (ABS-2) motif is present at residues 842-848; sequence GFIMHGN. Polar residues predominate over residues 849–859; that stretch reads VNPNAAGQLPT. Pro residues predominate over residues 869–882; the sequence is PPYPQPQPYQPAQP. Residues 962-972 are compositionally biased toward low complexity; sequence PSSSAYALPPG. Composition is skewed to polar residues over residues 984–995 and 1031–1053; these read PASQRTGPQNGW and PQSQMLQQQPSAPVPLSSQSSFP. Thr-1161 bears the Phosphothreonine mark. Ser-1163 carries the post-translational modification Phosphoserine. Lys-1217 is covalently cross-linked (Glycyl lysine isopeptide (Lys-Gly) (interchain with G-Cter in ubiquitin)).

This sequence belongs to the WD repeat SEC31 family. COPII is composed of at least 5 proteins: the SEC23/24 complex, the SEC13/31 complex and SAR1. SEC13 and SEC31 make a 2:2 tetramer that forms the edge element of the COPII outer coat. The tetramer self-assembles in multiple copies to form the complete polyhedral cage. Interacts (via WD 8) with SEC13. Interacts with PDCD6; interaction takes place in response to cytosolic calcium increase and leads to bridge together the BCR(KLHL12) complex and SEC31A, leading to monoubiquitination. Interacts with KLHL12. Monoubiquitinated by the BCR(KLHL12) E3 ubiquitin ligase complex, leading to regulate the size of COPII coats. Abundantly and ubiquitously expressed.

The protein resides in the cytoplasm. It is found in the cytoplasmic vesicle. Its subcellular location is the COPII-coated vesicle membrane. It localises to the endoplasmic reticulum membrane. The protein localises to the cytosol. In terms of biological role, component of the coat protein complex II (COPII) which promotes the formation of transport vesicles from the endoplasmic reticulum (ER). The coat has two main functions, the physical deformation of the endoplasmic reticulum membrane into vesicles and the selection of cargo molecules. This is Protein transport protein Sec31A (SEC31A) from Homo sapiens (Human).